The following is a 173-amino-acid chain: RNA pyrophosphohydrolase (173 aa).

The 144-residue stretch at 6 to 149 (GFRANVGIIL…KRGVYRRALR (144 aa)) folds into the Nudix hydrolase domain. A Nudix box motif is present at residues 38 to 59 (GGIDEGETPLDAMYRELWEEVG).

It belongs to the Nudix hydrolase family. RppH subfamily. A divalent metal cation is required as a cofactor.

Functionally, accelerates the degradation of transcripts by removing pyrophosphate from the 5'-end of triphosphorylated RNA, leading to a more labile monophosphorylated state that can stimulate subsequent ribonuclease cleavage. The sequence is that of RNA pyrophosphohydrolase from Psychrobacter sp. (strain PRwf-1).